A 303-amino-acid polypeptide reads, in one-letter code: US1 protein (303 aa).

The segment at 230–284 is disordered; the sequence is IPAPGRPLPRRRPSEGGMRAPRRRSRAPAPARSTAAAATPPRPGDPRAPAARRAG. Low complexity predominate over residues 256-268; that stretch reads APAPARSTAAAAT.

Belongs to the herpesviridae US2 family.

The polypeptide is US1 protein (US1) (Equine herpesvirus 1 (strain Kentucky A) (EHV-1)).